The sequence spans 78 residues: Delta-conotoxin TxVIA (78 aa).

The N-terminal stretch at M1–A22 is a signal peptide. The propeptide occupies D23–N49. 3 disulfides stabilise this stretch: C53/C68, C60/C72, and C67/C77. M59 bears the Methionine sulfoxide; partial mark.

This sequence belongs to the conotoxin O1 superfamily. In terms of tissue distribution, expressed by the venom duct. Is present in all duct parts with a highest content in part 4 (distal part near the pharynx).

Its subcellular location is the secreted. Delta-conotoxins bind to site 6 of voltage-gated sodium channels (Nav) and inhibit the inactivation process. Binding of this toxin is strongly calcium-dependent but not voltage-dependent. The binding site is most likely on the extracellular side of the sodium channel. Binds receptor sites on both mollusk and rat central nervous system, but despite its high affinity binding to rat sodium channel, it has no functional effect in vivo and in vitro on it. Also has no effect on Gambusia fish. Is important in mollusk for the paralysis of the prey. Upon injection of the peptide, a subordinate lobster assumes an exaggerated dominant posture (of a 'King-Kong' lobster!). This chain is Delta-conotoxin TxVIA, found in Conus textile (Cloth-of-gold cone).